The primary structure comprises 343 residues: MTETADLWPQLLGQLLERQSLSEAQAEQLMNGWLHNQVPDVVSGAILAALQAKGVSASELAGMARVLQRASLGSPLDLPLLVDTCGTGGDGAGTFNISTAVAFVVSAAGIPVVKHGNRSASGKVGSADVLEALGVNLSAEPEQVRAAVAEVGITFLFAPHWHPAMRAVIPYRRALKVRTVFNLLGPLVNPLYPNRQVIGVYAPELVPVMAEALRLLGRERAVVLHSREGLDEAGLDQPTDLGILSGGLVRTEVLNPRDYDLTPAPVQALQGGNLAENAAILAQVLQGSGAPAQRDVVALNAALALQVAGAVPDWGSGIAQAREILASGAAWDRLQKLVNFLAS.

5-phospho-alpha-D-ribose 1-diphosphate contacts are provided by residues Gly-86, 89–90 (GD), Thr-94, 96–99 (NIST), 114–122 (KHGNRSASG), and Ser-126. Gly-86 contacts anthranilate. Ser-98 contacts Mg(2+). Asn-117 contacts anthranilate. Anthranilate is bound at residue Arg-172. 2 residues coordinate Mg(2+): Asp-231 and Glu-232.

The protein belongs to the anthranilate phosphoribosyltransferase family. In terms of assembly, homodimer. The cofactor is Mg(2+).

The enzyme catalyses N-(5-phospho-beta-D-ribosyl)anthranilate + diphosphate = 5-phospho-alpha-D-ribose 1-diphosphate + anthranilate. The protein operates within amino-acid biosynthesis; L-tryptophan biosynthesis; L-tryptophan from chorismate: step 2/5. Catalyzes the transfer of the phosphoribosyl group of 5-phosphorylribose-1-pyrophosphate (PRPP) to anthranilate to yield N-(5'-phosphoribosyl)-anthranilate (PRA). The protein is Anthranilate phosphoribosyltransferase of Synechococcus sp. (strain JA-3-3Ab) (Cyanobacteria bacterium Yellowstone A-Prime).